The sequence spans 131 residues: ATP synthase epsilon chain (131 aa).

This sequence belongs to the ATPase epsilon chain family. As to quaternary structure, F-type ATPases have 2 components, CF(1) - the catalytic core - and CF(0) - the membrane proton channel. CF(1) has five subunits: alpha(3), beta(3), gamma(1), delta(1), epsilon(1). CF(0) has three main subunits: a, b and c.

The protein resides in the cell membrane. Functionally, produces ATP from ADP in the presence of a proton gradient across the membrane. The polypeptide is ATP synthase epsilon chain (Bacillus licheniformis (strain ATCC 14580 / DSM 13 / JCM 2505 / CCUG 7422 / NBRC 12200 / NCIMB 9375 / NCTC 10341 / NRRL NRS-1264 / Gibson 46)).